A 623-amino-acid chain; its full sequence is Glutathione import ATP-binding protein GsiA (623 aa).

2 ABC transporter domains span residues 15 to 269 (VENL…RALL) and 314 to 564 (LRVR…RKLL). Residues 49–56 (GESGSGKS) and 357–364 (GESGSGKS) each bind ATP.

This sequence belongs to the ABC transporter superfamily. Glutathione importer (TC 3.A.1.5.11) family. The complex is composed of two ATP-binding proteins (GsiA), two transmembrane proteins (GsiC and GsiD) and a solute-binding protein (GsiB).

The protein localises to the cell inner membrane. It carries out the reaction glutathione(out) + ATP + H2O = glutathione(in) + ADP + phosphate + H(+). Functionally, part of the ABC transporter complex GsiABCD involved in glutathione import. Responsible for energy coupling to the transport system. The chain is Glutathione import ATP-binding protein GsiA from Escherichia coli O6:H1 (strain CFT073 / ATCC 700928 / UPEC).